Reading from the N-terminus, the 422-residue chain is Gamma-glutamyl phosphate reductase (422 aa).

Belongs to the gamma-glutamyl phosphate reductase family.

It localises to the cytoplasm. The catalysed reaction is L-glutamate 5-semialdehyde + phosphate + NADP(+) = L-glutamyl 5-phosphate + NADPH + H(+). Its pathway is amino-acid biosynthesis; L-proline biosynthesis; L-glutamate 5-semialdehyde from L-glutamate: step 2/2. Functionally, catalyzes the NADPH-dependent reduction of L-glutamate 5-phosphate into L-glutamate 5-semialdehyde and phosphate. The product spontaneously undergoes cyclization to form 1-pyrroline-5-carboxylate. This is Gamma-glutamyl phosphate reductase from Shewanella piezotolerans (strain WP3 / JCM 13877).